The sequence spans 613 residues: Serine/threonine-protein kinase pkpA (613 aa).

The Protein kinase domain maps to 17-269 (SKLNTVLGKG…AQEILEHRFL (253 aa)). Residues 23–31 (LGKGAYKVV) and K50 contribute to the ATP site. D140 serves as the catalytic Proton acceptor. 2 disordered regions span residues 424–475 (LQPQ…STML) and 589–613 (VTQR…QELM). Over residues 427–441 (QPQPQPQPQPQPQPQ) the composition is skewed to pro residues. Low complexity predominate over residues 442–475 (PQFQLQPQLQYLSPQSTTSPGPTSDDNSTNSTML). Residues 592-602 (RGLQGTRSGAS) show a composition bias toward polar residues.

It belongs to the protein kinase superfamily. Ser/Thr protein kinase family.

The enzyme catalyses L-seryl-[protein] + ATP = O-phospho-L-seryl-[protein] + ADP + H(+). It carries out the reaction L-threonyl-[protein] + ATP = O-phospho-L-threonyl-[protein] + ADP + H(+). In terms of biological role, serine/threonine protein kinase that probably participates as an intermediate in an intracellular system controlling nuclear proliferation. This Phycomyces blakesleeanus (strain ATCC 8743b / DSM 1359 / FGSC 10004 / NBRC 33097 / NRRL 1555) protein is Serine/threonine-protein kinase pkpA (pkpA).